The chain runs to 669 residues: Threonine--tRNA ligase (669 aa).

The region spanning 3-60 (DAQQITLLVDGEETKVTTGTTGAELFFERRDVVVARVNGELKDLDQELPEGAEVEGVT) is the TGS domain. Residues 260–566 (DHRKLGSELD…LTEHYAGAFP (307 aa)) are catalytic. Zn(2+) contacts are provided by C365, H416, and H543.

This sequence belongs to the class-II aminoacyl-tRNA synthetase family. In terms of assembly, homodimer. The cofactor is Zn(2+).

It localises to the cytoplasm. It carries out the reaction tRNA(Thr) + L-threonine + ATP = L-threonyl-tRNA(Thr) + AMP + diphosphate + H(+). Catalyzes the attachment of threonine to tRNA(Thr) in a two-step reaction: L-threonine is first activated by ATP to form Thr-AMP and then transferred to the acceptor end of tRNA(Thr). Also edits incorrectly charged L-seryl-tRNA(Thr). The chain is Threonine--tRNA ligase from Pseudarthrobacter chlorophenolicus (strain ATCC 700700 / DSM 12829 / CIP 107037 / JCM 12360 / KCTC 9906 / NCIMB 13794 / A6) (Arthrobacter chlorophenolicus).